The sequence spans 107 residues: UPF0060 membrane protein Sala_0701 (107 aa).

Helical transmembrane passes span 4 to 24 (FAYIGAALAEIAGCFAFWAWL), 30 to 50 (VWWVVPGIASLALFAYLLTLV), 60 to 80 (AAYGGVYIAAALLWLWAVEGA), and 87 to 107 (LIGAAVCLGGAAIILFGPRGG).

Belongs to the UPF0060 family.

The protein localises to the cell inner membrane. In Sphingopyxis alaskensis (strain DSM 13593 / LMG 18877 / RB2256) (Sphingomonas alaskensis), this protein is UPF0060 membrane protein Sala_0701.